We begin with the raw amino-acid sequence, 445 residues long: tRNA-2-methylthio-N(6)-dimethylallyladenosine synthase (445 aa).

Residues K7–A121 enclose the MTTase N-terminal domain. [4Fe-4S] cluster contacts are provided by C16, C52, C84, C158, C162, and C165. One can recognise a Radical SAM core domain in the interval R144–R374. The 67-residue stretch at A377–A443 folds into the TRAM domain.

The protein belongs to the methylthiotransferase family. MiaB subfamily. In terms of assembly, monomer. It depends on [4Fe-4S] cluster as a cofactor.

Its subcellular location is the cytoplasm. It catalyses the reaction N(6)-dimethylallyladenosine(37) in tRNA + (sulfur carrier)-SH + AH2 + 2 S-adenosyl-L-methionine = 2-methylsulfanyl-N(6)-dimethylallyladenosine(37) in tRNA + (sulfur carrier)-H + 5'-deoxyadenosine + L-methionine + A + S-adenosyl-L-homocysteine + 2 H(+). In terms of biological role, catalyzes the methylthiolation of N6-(dimethylallyl)adenosine (i(6)A), leading to the formation of 2-methylthio-N6-(dimethylallyl)adenosine (ms(2)i(6)A) at position 37 in tRNAs that read codons beginning with uridine. In Solibacter usitatus (strain Ellin6076), this protein is tRNA-2-methylthio-N(6)-dimethylallyladenosine synthase.